Consider the following 120-residue polypeptide: Large ribosomal subunit protein uL18 (120 aa).

Belongs to the universal ribosomal protein uL18 family. As to quaternary structure, part of the 50S ribosomal subunit; part of the 5S rRNA/L5/L18/L25 subcomplex. Contacts the 5S and 23S rRNAs.

Functionally, this is one of the proteins that bind and probably mediate the attachment of the 5S RNA into the large ribosomal subunit, where it forms part of the central protuberance. This chain is Large ribosomal subunit protein uL18, found in Rhizobium etli (strain ATCC 51251 / DSM 11541 / JCM 21823 / NBRC 15573 / CFN 42).